The following is a 424-amino-acid chain: Geranylgeranyl pyrophosphate synthase D (424 aa).

The tract at residues 42 to 73 is disordered; that stretch reads PSATWPSVPKVHKRNRSTSLSDQQTAKKAHAN. Residues 58–67 are compositionally biased toward polar residues; the sequence is STSLSDQQTA. Isopentenyl diphosphate contacts are provided by lysine 147, arginine 150, and histidine 179. Aspartate 186 and aspartate 190 together coordinate Mg(2+). Arginine 195 lines the dimethylallyl diphosphate pocket. Arginine 196 is an isopentenyl diphosphate binding site. 5 residues coordinate dimethylallyl diphosphate: lysine 274, threonine 275, glutamine 311, lysine 328, and lysine 338.

The protein belongs to the FPP/GGPP synthase family. Mg(2+) serves as cofactor.

Its subcellular location is the cytoplasm. It carries out the reaction isopentenyl diphosphate + dimethylallyl diphosphate = (2E)-geranyl diphosphate + diphosphate. The catalysed reaction is isopentenyl diphosphate + (2E)-geranyl diphosphate = (2E,6E)-farnesyl diphosphate + diphosphate. The enzyme catalyses isopentenyl diphosphate + (2E,6E)-farnesyl diphosphate = (2E,6E,10E)-geranylgeranyl diphosphate + diphosphate. It functions in the pathway isoprenoid biosynthesis; farnesyl diphosphate biosynthesis; farnesyl diphosphate from geranyl diphosphate and isopentenyl diphosphate: step 1/1. It participates in isoprenoid biosynthesis; geranyl diphosphate biosynthesis; geranyl diphosphate from dimethylallyl diphosphate and isopentenyl diphosphate: step 1/1. Its pathway is isoprenoid biosynthesis; geranylgeranyl diphosphate biosynthesis; geranylgeranyl diphosphate from farnesyl diphosphate and isopentenyl diphosphate: step 1/1. Functionally, catalyzes the trans-addition of the 3 molecules of isopentenyl diphosphate (IPP) onto dimethylallyl diphosphate (DMAPP) to form geranylgeranyl pyrophosphate (GGDP). This chain is Geranylgeranyl pyrophosphate synthase D (GGS-D), found in Phomopsis amygdali (Fusicoccum amygdali).